Here is a 328-residue protein sequence, read N- to C-terminus: Arylacetonitrilase (328 aa).

Residues 5-278 (VRVAVTQAEP…EGIIYADLDF (274 aa)) enclose the CN hydrolase domain. Residue glutamate 45 is the Proton acceptor of the active site. Lysine 125 is a catalytic residue. The active-site Nucleophile is cysteine 160.

The protein belongs to the carbon-nitrogen hydrolase superfamily. Nitrilase family.

It carries out the reaction a nitrile + 2 H2O = a carboxylate + NH4(+). The enzyme catalyses 4-chlorophenylacetonitrile + 2 H2O = 4-chlorophenylacetate + NH4(+). Nitrilase that hydrolyzes preferentially phenylacetonitrile, (R,S)-mandelonitrile, and 3-indolylacetonitrile. The sequence is that of Arylacetonitrilase from Aspergillus niger (strain ATCC MYA-4892 / CBS 513.88 / FGSC A1513).